A 277-amino-acid polypeptide reads, in one-letter code: uncharacterized protein (277 aa).

An ATP-binding site is contributed by 32-39 (GPQGSGKS).

It belongs to the GLYK kinase family.

It is found in the cytoplasm. The protein resides in the nucleus. In terms of biological role, has a role in meiosis. This is an uncharacterized protein from Schizosaccharomyces pombe (strain 972 / ATCC 24843) (Fission yeast).